The chain runs to 210 residues: Urease accessory protein UreF (210 aa).

It belongs to the UreF family. UreD, UreF and UreG form a complex that acts as a GTP-hydrolysis-dependent molecular chaperone, activating the urease apoprotein by helping to assemble the nickel containing metallocenter of UreC. The UreE protein probably delivers the nickel.

It is found in the cytoplasm. In terms of biological role, required for maturation of urease via the functional incorporation of the urease nickel metallocenter. The chain is Urease accessory protein UreF from Cereibacter sphaeroides (strain ATCC 17023 / DSM 158 / JCM 6121 / CCUG 31486 / LMG 2827 / NBRC 12203 / NCIMB 8253 / ATH 2.4.1.) (Rhodobacter sphaeroides).